The chain runs to 228 residues: Cytochrome b6-f complex iron-sulfur subunit 2, chloroplastic (228 aa).

The N-terminal 49 residues, 1 to 49, are a transit peptide targeting the chloroplast; that stretch reads MASSTLSPVTQLCSSKSGLSSVSQCLLLKPMKINSHGLGKDKRMKVKCM. A helical transmembrane segment spans residues 71–91; it reads LLLGALSLPTAGMLVPYATFF. In terms of domain architecture, Rieske spans 115–211; the sequence is ASEWLKTHPP…ADIDDGKVVF (97 aa). [2Fe-2S] cluster-binding residues include cysteine 157, histidine 159, cysteine 175, and histidine 178. Cysteine 162 and cysteine 177 form a disulfide bridge.

Belongs to the Rieske iron-sulfur protein family. The 4 large subunits of the cytochrome b6-f complex are cytochrome b6, subunit IV (17 kDa polypeptide, petD), cytochrome f and the Rieske protein, while the 4 small subunits are petG, petL, petM and petN. The complex functions as a dimer. It depends on [2Fe-2S] cluster as a cofactor.

It is found in the plastid. Its subcellular location is the chloroplast thylakoid membrane. The enzyme catalyses 2 oxidized [plastocyanin] + a plastoquinol + 2 H(+)(in) = 2 reduced [plastocyanin] + a plastoquinone + 4 H(+)(out). Component of the cytochrome b6-f complex, which mediates electron transfer between photosystem II (PSII) and photosystem I (PSI), cyclic electron flow around PSI, and state transitions. The sequence is that of Cytochrome b6-f complex iron-sulfur subunit 2, chloroplastic (petC2) from Nicotiana tabacum (Common tobacco).